The chain runs to 262 residues: Thiazole synthase (262 aa).

Lys97 functions as the Schiff-base intermediate with DXP in the catalytic mechanism. 1-deoxy-D-xylulose 5-phosphate contacts are provided by residues Gly158, 185 to 186 (AG), and 207 to 208 (NT). The tract at residues 243–262 (DKAQASTPTVGQPFWHSAEY) is disordered.

It belongs to the ThiG family. In terms of assembly, homotetramer. Forms heterodimers with either ThiH or ThiS.

Its subcellular location is the cytoplasm. It catalyses the reaction [ThiS sulfur-carrier protein]-C-terminal-Gly-aminoethanethioate + 2-iminoacetate + 1-deoxy-D-xylulose 5-phosphate = [ThiS sulfur-carrier protein]-C-terminal Gly-Gly + 2-[(2R,5Z)-2-carboxy-4-methylthiazol-5(2H)-ylidene]ethyl phosphate + 2 H2O + H(+). It functions in the pathway cofactor biosynthesis; thiamine diphosphate biosynthesis. In terms of biological role, catalyzes the rearrangement of 1-deoxy-D-xylulose 5-phosphate (DXP) to produce the thiazole phosphate moiety of thiamine. Sulfur is provided by the thiocarboxylate moiety of the carrier protein ThiS. In vitro, sulfur can be provided by H(2)S. This chain is Thiazole synthase, found in Neisseria meningitidis serogroup A / serotype 4A (strain DSM 15465 / Z2491).